Consider the following 456-residue polypeptide: Phosphomethylpyrimidine synthase (456 aa).

Substrate is bound by residues Asn80, Met109, Tyr139, His175, Ser195 to Gly197, Asp236 to Arg239, and Glu275. Zn(2+) is bound at residue His279. Substrate is bound at residue Tyr302. Residue His343 coordinates Zn(2+). Residues Cys423, Cys426, and Cys431 each coordinate [4Fe-4S] cluster.

Belongs to the ThiC family. [4Fe-4S] cluster serves as cofactor.

The enzyme catalyses 5-amino-1-(5-phospho-beta-D-ribosyl)imidazole + S-adenosyl-L-methionine = 4-amino-2-methyl-5-(phosphooxymethyl)pyrimidine + CO + 5'-deoxyadenosine + formate + L-methionine + 3 H(+). The protein operates within cofactor biosynthesis; thiamine diphosphate biosynthesis. Its function is as follows. Catalyzes the synthesis of the hydroxymethylpyrimidine phosphate (HMP-P) moiety of thiamine from aminoimidazole ribotide (AIR) in a radical S-adenosyl-L-methionine (SAM)-dependent reaction. In Prochlorococcus marinus (strain MIT 9312), this protein is Phosphomethylpyrimidine synthase.